The sequence spans 469 residues: Properdin (469 aa).

The signal sequence occupies residues 1–27 (MITEGAQAPRLLLPPLLLLLTLPATGS). TSP type-1 domains are found at residues 28 to 76 (DPVL…QPCR), 77 to 134 (SPRW…QCCP), 136 to 191 (MGGW…QSCP), 193 to 255 (HGAW…PPCP), 257 to 313 (AGSW…VPCP), 315 to 377 (DGEW…QHCP), and 379 to 462 (KGSW…PACK). 3 disulfide bridges follow: C32-C56, C43-C72, and C57-C75. C-linked (Man) tryptophan glycans are attached at residues W83 and W86. Disulfide bonds link C89–C127, C93–C133, C104–C111, C132–C170, C148–C184, C152–C190, and C163–C174. W139, W142, and W145 each carry a C-linked (Man) tryptophan glycan. O-linked (Fuc...) threonine glycosylation is present at T151. 3 C-linked (Man) tryptophan glycosylation sites follow: W196, W199, and W202. Cystine bridges form between C205–C248, C209–C254, and C224–C238. The O-linked (Fuc...) serine glycan is linked to S208. A disordered region spans residues 218-238 (ETRSRKCSAPEPSQKPPGKPC). W260 and W263 each carry a C-linked (Man) tryptophan glycan. 3 disulfides stabilise this stretch: C269-C306, C273-C312, and C284-C296. The O-linked (Fuc...) threonine glycan is linked to T272. 2 C-linked (Man) tryptophan glycosylation sites follow: W321 and W324. Intrachain disulfides connect C327-C370, C337-C376, and C350-C360. Residues 351–359 (KGRKFDGHR) form an interaction with Complement C3 beta chain region. 3 C-linked (Man) tryptophan glycosylation sites follow: W382, W385, and W388. Cystine bridges form between C391–C455, C395–C461, and C407–C439. The N-linked (GlcNAc...) asparagine glycan is linked to N428.

In terms of assembly, in plasma, properdin exists as dimers, trimers or tetramers in the relative proportions of 26:54:20. Interacts with the pro-C3-convertase enzyme complex (C3b-Bb) comprised of Complement C3 beta chain (C3b) and the Complement factor B Bb fragment (Bb), where it binds (via its TSP type-1 5 domain) with C3b and Bb. This interaction stabilizes the complex and allows it to become the active C3-convertase enzyme complex (C3b-Bb-FP). Interacts with C3b. Interacts with CFB.

The protein resides in the secreted. A positive regulator of the alternate pathway of complement. It binds to and stabilizes the C3- and C5-convertase enzyme complexes. Inhibits CFI-CFH mediated degradation of Inhibits CFI-CFH mediated degradation of Complement C3 beta chain (C3b). This Pongo abelii (Sumatran orangutan) protein is Properdin (CFP).